The sequence spans 61 residues: Large ribosomal subunit protein uL29 (61 aa).

The protein belongs to the universal ribosomal protein uL29 family.

This is Large ribosomal subunit protein uL29 from Xanthomonas campestris pv. campestris (strain 8004).